We begin with the raw amino-acid sequence, 481 residues long: Phosphoglucosamine mutase (481 aa).

The active-site Phosphoserine intermediate is the serine 129. Mg(2+) is bound by residues serine 129, aspartate 271, aspartate 273, and aspartate 275. Residue serine 129 is modified to Phosphoserine.

It belongs to the phosphohexose mutase family. Mg(2+) is required as a cofactor. Activated by phosphorylation.

The catalysed reaction is alpha-D-glucosamine 1-phosphate = D-glucosamine 6-phosphate. Catalyzes the conversion of glucosamine-6-phosphate to glucosamine-1-phosphate. The polypeptide is Phosphoglucosamine mutase (Picosynechococcus sp. (strain ATCC 27264 / PCC 7002 / PR-6) (Agmenellum quadruplicatum)).